Here is a 347-residue protein sequence, read N- to C-terminus: Ribosomal RNA small subunit methyltransferase C (347 aa).

The protein belongs to the methyltransferase superfamily. RsmC family. Monomer.

It localises to the cytoplasm. The catalysed reaction is guanosine(1207) in 16S rRNA + S-adenosyl-L-methionine = N(2)-methylguanosine(1207) in 16S rRNA + S-adenosyl-L-homocysteine + H(+). Its function is as follows. Specifically methylates the guanine in position 1207 of 16S rRNA in the 30S particle. This is Ribosomal RNA small subunit methyltransferase C from Shewanella baltica (strain OS195).